We begin with the raw amino-acid sequence, 716 residues long: MTLTDSEMEYIEGILGRKMNELEEGMLDVMFSEHCSYKSSRPILGTFPTEGENIILGPGDDAGLVSVTDKYALAVGMESHNHPSAIEPYGGAGTGIGGILRDIISMGARPIALLDSLRFGSLDDEKSKYLFEHVVEGISDYGNRVGVPTVAGEVEFDDSFRTNPLVNVMCVGLVEKDKIVRGKAPYVGDVFLLMGGTTGRDGIHGVTFASEELTSDSETEDRPAVQVADPFTKKRVLEASLEILDEINVSGVKDLGGGGLTCCISELVDESNNGARVDLRNIPLRETGMTPYEIMLSESQERMVFVINPKDVKKAQEICDKHEIVSAVIGEVIDGNNMIIDDEGSSLADLPTILLADPPSLNRELKEIAEDTSKVEVDHPPVRQSLLELLSSPNIASKQWVYKQYDHEVQVRTVVKPGDDAAVLRIDDDTAIALTTDANTIHTKLSPFDGGAGCVAEAIRNVISMGATPYAVVDCLNFGNPETPEILWQFKRTIEGMSLVAENFNAPVISGNVSFYNETEGIKINPTPAVGVIGVENIENIRTMDFKNSGDKILLIGTTYDEVTGSEYHRTIHNIEKGMAPRIRIEDELANGKTILKLLDEDSSKNITAVHDVSHGGLAVALSEMVMKGNIGCEIDLDSIITSEDLEESDLIYSESHGRYIITVNADAVDEILNKIDVPVAIIGEVKGAVLKLGDNEFTIDELNDSYHGVIEKYMA.

Residue His-34 is part of the active site. Tyr-37 contacts ATP. Glu-78 serves as a coordination point for Mg(2+). Substrate is bound by residues 79 to 82 and Arg-101; that span reads SHNH. His-80 (proton acceptor) is an active-site residue. Asp-102 serves as a coordination point for Mg(2+). Position 226 (Gln-226) interacts with substrate. Asp-254 is a binding site for Mg(2+). 298–300 serves as a coordination point for substrate; the sequence is ESQ. Positions 474 and 511 each coordinate ATP. Asn-512 contributes to the Mg(2+) binding site. A substrate-binding site is contributed by Ser-514.

This sequence belongs to the FGAMS family. As to quaternary structure, monomer. Part of the FGAM synthase complex composed of 1 PurL, 1 PurQ and 2 PurS subunits.

Its subcellular location is the cytoplasm. It catalyses the reaction N(2)-formyl-N(1)-(5-phospho-beta-D-ribosyl)glycinamide + L-glutamine + ATP + H2O = 2-formamido-N(1)-(5-O-phospho-beta-D-ribosyl)acetamidine + L-glutamate + ADP + phosphate + H(+). Its pathway is purine metabolism; IMP biosynthesis via de novo pathway; 5-amino-1-(5-phospho-D-ribosyl)imidazole from N(2)-formyl-N(1)-(5-phospho-D-ribosyl)glycinamide: step 1/2. Its function is as follows. Part of the phosphoribosylformylglycinamidine synthase complex involved in the purines biosynthetic pathway. Catalyzes the ATP-dependent conversion of formylglycinamide ribonucleotide (FGAR) and glutamine to yield formylglycinamidine ribonucleotide (FGAM) and glutamate. The FGAM synthase complex is composed of three subunits. PurQ produces an ammonia molecule by converting glutamine to glutamate. PurL transfers the ammonia molecule to FGAR to form FGAM in an ATP-dependent manner. PurS interacts with PurQ and PurL and is thought to assist in the transfer of the ammonia molecule from PurQ to PurL. The protein is Phosphoribosylformylglycinamidine synthase subunit PurL of Methanobrevibacter smithii (strain ATCC 35061 / DSM 861 / OCM 144 / PS).